The primary structure comprises 207 residues: Ribosomal RNA small subunit methyltransferase G (207 aa).

Residues G73, L78, 124–125 (VE), and R139 contribute to the S-adenosyl-L-methionine site.

The protein belongs to the methyltransferase superfamily. RNA methyltransferase RsmG family.

The protein localises to the cytoplasm. The catalysed reaction is guanosine(527) in 16S rRNA + S-adenosyl-L-methionine = N(7)-methylguanosine(527) in 16S rRNA + S-adenosyl-L-homocysteine. In terms of biological role, specifically methylates the N7 position of guanine in position 527 of 16S rRNA. The polypeptide is Ribosomal RNA small subunit methyltransferase G (Salmonella schwarzengrund (strain CVM19633)).